A 282-amino-acid chain; its full sequence is 4-hydroxy-3-methylbut-2-enyl diphosphate reductase (282 aa).

A [4Fe-4S] cluster-binding site is contributed by Cys12. Residues His40 and His72 each coordinate (2E)-4-hydroxy-3-methylbut-2-enyl diphosphate. Residues His40 and His72 each contribute to the dimethylallyl diphosphate site. The isopentenyl diphosphate site is built by His40 and His72. Cys94 contributes to the [4Fe-4S] cluster binding site. Residue His122 participates in (2E)-4-hydroxy-3-methylbut-2-enyl diphosphate binding. His122 lines the dimethylallyl diphosphate pocket. An isopentenyl diphosphate-binding site is contributed by His122. Glu124 acts as the Proton donor in catalysis. (2E)-4-hydroxy-3-methylbut-2-enyl diphosphate is bound at residue Thr160. Cys188 is a binding site for [4Fe-4S] cluster. The (2E)-4-hydroxy-3-methylbut-2-enyl diphosphate site is built by Ser216, Asn218, and Ser260. Dimethylallyl diphosphate is bound by residues Ser216, Asn218, and Ser260. Ser216, Asn218, and Ser260 together coordinate isopentenyl diphosphate.

The protein belongs to the IspH family. The cofactor is [4Fe-4S] cluster.

It carries out the reaction isopentenyl diphosphate + 2 oxidized [2Fe-2S]-[ferredoxin] + H2O = (2E)-4-hydroxy-3-methylbut-2-enyl diphosphate + 2 reduced [2Fe-2S]-[ferredoxin] + 2 H(+). It catalyses the reaction dimethylallyl diphosphate + 2 oxidized [2Fe-2S]-[ferredoxin] + H2O = (2E)-4-hydroxy-3-methylbut-2-enyl diphosphate + 2 reduced [2Fe-2S]-[ferredoxin] + 2 H(+). The protein operates within isoprenoid biosynthesis; dimethylallyl diphosphate biosynthesis; dimethylallyl diphosphate from (2E)-4-hydroxy-3-methylbutenyl diphosphate: step 1/1. Its pathway is isoprenoid biosynthesis; isopentenyl diphosphate biosynthesis via DXP pathway; isopentenyl diphosphate from 1-deoxy-D-xylulose 5-phosphate: step 6/6. Functionally, catalyzes the conversion of 1-hydroxy-2-methyl-2-(E)-butenyl 4-diphosphate (HMBPP) into a mixture of isopentenyl diphosphate (IPP) and dimethylallyl diphosphate (DMAPP). Acts in the terminal step of the DOXP/MEP pathway for isoprenoid precursor biosynthesis. The polypeptide is 4-hydroxy-3-methylbut-2-enyl diphosphate reductase (Geotalea uraniireducens (strain Rf4) (Geobacter uraniireducens)).